A 714-amino-acid polypeptide reads, in one-letter code: MTAIKKTITYGQHELTLETGEIARQADGAVMVSYGDTVVLVSVVGKREVKEGQDFFPLTVDYQEKTYAAGKIPGGFFKREGRPSEKETLTSRLIDRPLRPLFPEAFYNEVQVVATVMSSDPEIDADIPAIIGASAALAISGIPFYGPIGAARVGYINGEYVLNPTASQLKETALDLVVAATESAVLMVESEAKELPEDVMLGSVVYGHEQMQIVISAINELAAEVGKEPWDWAPPEPNTELIAKVEALAGADINEAYKIKSKSARSSKLDEIRSRVLGELITETTSTSEANEIKSIFHNLEAKVVRSQILNGEPRIDGRDTRTVRPISIRTGVLPRTHGSALFTRGETQALVVATLGTGRDEQIIDALQGEYADRFMLHYNMPPYATGETGRVGTPKRREIGHGRLAKRALLAVLPSQEEFGYTIRVVSEITESNGSSSMASVCGGCLSLLDAGVPLKAHVAGIAMGLIKEGNRVAVLTDILGDEDHLGDMDFKVAGTESGITALQMDIKITGITAEIMRVALSQAKEGRLHILGLMKEAVGEQPQELSEFAPRIITMKINPEKIRDVIGKGGAVIRALTEETGTTIDIEEDGTIKIGCTSAEAGEEAKKRIEAITAEVEVGQVYDGTVLKLLDFGAIVSLLPGKDGLLHISQIAHQRVNAVADFLKEGQVVKVKVLEVDDKGRVRLSAKALIEAPSAEAPEEPAVAATGADQQ.

Mg(2+) contacts are provided by Asp486 and Asp492. The KH domain occupies 553–612; the sequence is PRIITMKINPEKIRDVIGKGGAVIRALTEETGTTIDIEEDGTIKIGCTSAEAGEEAKKRI. Positions 622–690 constitute an S1 motif domain; the sequence is GQVYDGTVLK…DKGRVRLSAK (69 aa).

Belongs to the polyribonucleotide nucleotidyltransferase family. Requires Mg(2+) as cofactor.

Its subcellular location is the cytoplasm. It carries out the reaction RNA(n+1) + phosphate = RNA(n) + a ribonucleoside 5'-diphosphate. In terms of biological role, involved in mRNA degradation. Catalyzes the phosphorolysis of single-stranded polyribonucleotides processively in the 3'- to 5'-direction. The chain is Polyribonucleotide nucleotidyltransferase from Methylobacillus flagellatus (strain ATCC 51484 / DSM 6875 / VKM B-1610 / KT).